A 214-amino-acid chain; its full sequence is MASYKNNNLVRLCIMGDGGVGKTAVTIQFISNHFVYYYDPTIEDSYRKQCVIDDQVYMLDILDTAGQDELTAMRDQWIRSCEGFVLVYSITSRSSFDQVQFFREQIIRVLDRDDVPIMMIGNKSDLDDERQVTYQEGKDLARCLGMSFMEVSAKSRANIEEVFNETVRSVKRREESLLKKDKSKDGKDIKKKNSIIKKLNQKVNNTKTSICKMM.

Gly16–Thr23 serves as a coordination point for GTP. The short motif at Tyr38–Tyr46 is the Effector region element. GTP-binding positions include Asp63–Gln67 and Asn122–Asp125. A Cysteine methyl ester modification is found at Cys211. Cys211 carries S-geranylgeranyl cysteine lipidation. A propeptide spans Lys212–Met214 (removed in mature form).

The protein belongs to the small GTPase superfamily. Ras family.

The protein localises to the cell membrane. It catalyses the reaction GTP + H2O = GDP + phosphate + H(+). In terms of biological role, ras proteins bind GDP/GTP and possess intrinsic GTPase activity. In Dictyostelium discoideum (Social amoeba), this protein is Ras-like protein rasZ (rasZ).